A 207-amino-acid polypeptide reads, in one-letter code: Uracil phosphoribosyltransferase (207 aa).

5-phospho-alpha-D-ribose 1-diphosphate is bound by residues Arg77, Arg102, and 129 to 137 (DPMLATGVS). Uracil-binding positions include Ile192 and 197 to 199 (GDA). Asp198 provides a ligand contact to 5-phospho-alpha-D-ribose 1-diphosphate.

The protein belongs to the UPRTase family. Mg(2+) is required as a cofactor.

It carries out the reaction UMP + diphosphate = 5-phospho-alpha-D-ribose 1-diphosphate + uracil. It functions in the pathway pyrimidine metabolism; UMP biosynthesis via salvage pathway; UMP from uracil: step 1/1. Allosterically activated by GTP. In terms of biological role, catalyzes the conversion of uracil and 5-phospho-alpha-D-ribose 1-diphosphate (PRPP) to UMP and diphosphate. The sequence is that of Uracil phosphoribosyltransferase from Fervidobacterium nodosum (strain ATCC 35602 / DSM 5306 / Rt17-B1).